Consider the following 291-residue polypeptide: Nitrogenase iron protein 1 (291 aa).

10-17 (GKGGIGKS) is an ATP binding site. A [4Fe-4S] cluster-binding site is contributed by cysteine 98. Arginine 101 carries the ADP-ribosylarginine; by dinitrogenase reductase ADP-ribosyltransferase modification. Residue cysteine 133 participates in [4Fe-4S] cluster binding.

This sequence belongs to the NifH/BchL/ChlL family. As to quaternary structure, homodimer. It depends on [4Fe-4S] cluster as a cofactor. In terms of processing, the reversible ADP-ribosylation of Arg-101 inactivates the nitrogenase reductase and regulates nitrogenase activity.

It catalyses the reaction N2 + 8 reduced [2Fe-2S]-[ferredoxin] + 16 ATP + 16 H2O = H2 + 8 oxidized [2Fe-2S]-[ferredoxin] + 2 NH4(+) + 16 ADP + 16 phosphate + 6 H(+). Its function is as follows. The key enzymatic reactions in nitrogen fixation are catalyzed by the nitrogenase complex, which has 2 components: the iron protein (component 2) and a component 1 which is either a molybdenum-iron protein, a vanadium-iron, or an iron-iron protein. The protein is Nitrogenase iron protein 1 (nifH1) of Azotobacter chroococcum mcd 1.